We begin with the raw amino-acid sequence, 363 residues long: Flagellar P-ring protein (363 aa).

Positions 1 to 20 are cleaved as a signal peptide; the sequence is MKLKLILAVAMLAFSLPSQA.

Belongs to the FlgI family. As to quaternary structure, the basal body constitutes a major portion of the flagellar organelle and consists of four rings (L,P,S, and M) mounted on a central rod.

It is found in the periplasm. The protein resides in the bacterial flagellum basal body. Assembles around the rod to form the L-ring and probably protects the motor/basal body from shearing forces during rotation. The protein is Flagellar P-ring protein of Shewanella sp. (strain MR-7).